The following is a 535-amino-acid chain: GMP synthase [glutamine-hydrolyzing] (535 aa).

The region spanning 4–210 (KILILDFGSQ…VHEICKCKPD (207 aa)) is the Glutamine amidotransferase type-1 domain. Cys85 functions as the Nucleophile in the catalytic mechanism. Residues His184 and Glu186 contribute to the active site. The GMPS ATP-PPase domain occupies 211 to 403 (WVMGDYIAEA…LGLPREMVYR (193 aa)). Position 238 to 244 (238 to 244 (SGGVDSS)) interacts with ATP.

As to quaternary structure, homodimer.

It carries out the reaction XMP + L-glutamine + ATP + H2O = GMP + L-glutamate + AMP + diphosphate + 2 H(+). It functions in the pathway purine metabolism; GMP biosynthesis; GMP from XMP (L-Gln route): step 1/1. In terms of biological role, catalyzes the synthesis of GMP from XMP. The polypeptide is GMP synthase [glutamine-hydrolyzing] (Polynucleobacter necessarius subsp. necessarius (strain STIR1)).